The following is a 114-amino-acid chain: Fumarate reductase subunit D (114 aa).

The next 3 membrane-spanning stretches (helical) occupy residues 27 to 47, 50 to 70, and 94 to 114; these read ICFP…LIPM, IIVF…TIFP, and WLFY…VIAL.

Belongs to the FrdD family. As to quaternary structure, part of an enzyme complex containing four subunits: a flavoprotein (FrdA), an iron-sulfur protein (FrdB), and two hydrophobic anchor proteins (FrdC and FrdD).

The protein resides in the cell inner membrane. Anchors the catalytic components of the fumarate reductase complex to the cell membrane, binds quinones. The polypeptide is Fumarate reductase subunit D (Haemophilus ducreyi (strain 35000HP / ATCC 700724)).